A 377-amino-acid chain; its full sequence is Phospho-N-acetylmuramoyl-pentapeptide-transferase (377 aa).

The next 11 membrane-spanning stretches (helical) occupy residues 9–29, 59–79, 85–105, 122–142, 155–175, 178–198, 210–230, 247–267, 274–294, 299–319, and 354–374; these read YITL…LVAG, TPTM…LLWA, FVWV…MDDY, FFWQ…AVSA, WVGS…VPFF, VSYP…IVGT, GLAI…AYVV, AAEL…FLWF, VFMG…IAVI, IVLF…MVQV, and QVVV…LSTL.

Belongs to the glycosyltransferase 4 family. MraY subfamily. Mg(2+) is required as a cofactor.

It is found in the cell inner membrane. It catalyses the reaction UDP-N-acetyl-alpha-D-muramoyl-L-alanyl-gamma-D-glutamyl-meso-2,6-diaminopimeloyl-D-alanyl-D-alanine + di-trans,octa-cis-undecaprenyl phosphate = di-trans,octa-cis-undecaprenyl diphospho-N-acetyl-alpha-D-muramoyl-L-alanyl-D-glutamyl-meso-2,6-diaminopimeloyl-D-alanyl-D-alanine + UMP. Its pathway is cell wall biogenesis; peptidoglycan biosynthesis. In terms of biological role, catalyzes the initial step of the lipid cycle reactions in the biosynthesis of the cell wall peptidoglycan: transfers peptidoglycan precursor phospho-MurNAc-pentapeptide from UDP-MurNAc-pentapeptide onto the lipid carrier undecaprenyl phosphate, yielding undecaprenyl-pyrophosphoryl-MurNAc-pentapeptide, known as lipid I. The polypeptide is Phospho-N-acetylmuramoyl-pentapeptide-transferase (Bordetella bronchiseptica (strain ATCC BAA-588 / NCTC 13252 / RB50) (Alcaligenes bronchisepticus)).